Reading from the N-terminus, the 132-residue chain is Fatty acid-binding protein, adipocyte (132 aa).

The Nuclear localization signal signature appears at 22-32 (KELGVGFATRK). (9Z,12Z)-octadecadienoate is bound by residues arginine 107 and arginine 127.

It belongs to the calycin superfamily. Fatty-acid binding protein (FABP) family. As to quaternary structure, monomer.

It localises to the cytoplasm. The protein localises to the nucleus. In terms of biological role, lipid transport protein in adipocytes. Binds both long chain fatty acids and retinoic acid. Delivers long-chain fatty acids and retinoic acid to their cognate receptors in the nucleus. Has the highest binding affinity for linoleic acid and decreasing relative affinity for eicosapentaenoic acid (EPA), alpha-linolenic acid (ALA), docosahexaenoic acid (DHA), oleic acid, palmitic acid and stearic acid, respectively. This chain is Fatty acid-binding protein, adipocyte, found in Pygoscelis papua (Gentoo penguin).